Consider the following 178-residue polypeptide: MSEVSCKKRDDYLEWPEYFMAVAFLSAQRSKDPNSQVGACIVNSENKIVGIGYNGMPNGCSDDVLPWRRTAENKLDTKYPYVCHAELNAIMNKNSTDVKGCSMYVALFPCNECAKLIIQAGIKEVIFMSDKYHDSDEATAARLLFNMAGVTFRKFIPKCSKIVIDFDSINSRPSQKLQ.

The CMP/dCMP-type deaminase domain occupies 14-145 (EWPEYFMAVA…DEATAARLLF (132 aa)). Histidine 84 contacts Zn(2+). The active-site Proton donor is glutamate 86. Zn(2+) contacts are provided by cysteine 110 and cysteine 113. Serine 174 carries the post-translational modification Phosphoserine.

The protein belongs to the cytidine and deoxycytidylate deaminase family. Homohexamer. The cofactor is Zn(2+).

The catalysed reaction is dCMP + H2O + H(+) = dUMP + NH4(+). The enzyme catalyses 5-hydroxymethyl-dCMP + H2O + H(+) = 5-hydroxymethyl-dUMP + NH4(+). Its activity is regulated as follows. Allosteric enzyme whose activity is greatly influenced by the end products of its metabolic pathway, dCTP and dTTP. Catalyzes the deamination of dCMP to dUMP, providing the nucleoside monophosphate substrate for the thymidylate synthase/TYMS. Also, part of a nucleotide salvage pathway that eliminates epigenetically modified 5-hydroxymethyl-dCMP (hmdCMP) in a two-step process entailing deamination to cytotoxic 5-hydroxymethyl-dUMP (hmdUMP), followed by its hydrolysis into 5-hydroxymethyluracil (hmU) and 2-deoxy-D-ribose 5-phosphate (deoxyribosephosphate). Catalyzes the first step in that pathway, the deamination of 5-hydroxymethyl-dCMP (hmdCMP). In Homo sapiens (Human), this protein is Deoxycytidylate deaminase.